The following is a 539-amino-acid chain: Phosphoenolpyruvate carboxykinase (ATP) (539 aa).

The substrate site is built by R64, Y206, and K212. ATP-binding positions include K212, H231, and 247–255 (GLSGTGKTT). Positions 212 and 231 each coordinate Mn(2+). D268 lines the Mn(2+) pocket. ATP is bound by residues E296, R332, 448–449 (RI), and T454. R332 lines the substrate pocket.

Belongs to the phosphoenolpyruvate carboxykinase (ATP) family. Monomer. The cofactor is Mn(2+).

It is found in the cytoplasm. It catalyses the reaction oxaloacetate + ATP = phosphoenolpyruvate + ADP + CO2. Its pathway is carbohydrate biosynthesis; gluconeogenesis. In terms of biological role, involved in the gluconeogenesis. Catalyzes the conversion of oxaloacetate (OAA) to phosphoenolpyruvate (PEP) through direct phosphoryl transfer between the nucleoside triphosphate and OAA. The chain is Phosphoenolpyruvate carboxykinase (ATP) from Pectobacterium atrosepticum (strain SCRI 1043 / ATCC BAA-672) (Erwinia carotovora subsp. atroseptica).